Consider the following 178-residue polypeptide: Inorganic pyrophosphatase (178 aa).

Substrate contacts are provided by lysine 30, arginine 44, and tyrosine 56. Residues aspartate 66, aspartate 71, and aspartate 103 each coordinate Mg(2+). Tyrosine 140 serves as a coordination point for substrate.

The protein belongs to the PPase family. As to quaternary structure, homohexamer. Mg(2+) is required as a cofactor.

The protein localises to the cytoplasm. It catalyses the reaction diphosphate + H2O = 2 phosphate + H(+). Functionally, catalyzes the hydrolysis of inorganic pyrophosphate (PPi) forming two phosphate ions. This Pyrococcus furiosus (strain ATCC 43587 / DSM 3638 / JCM 8422 / Vc1) protein is Inorganic pyrophosphatase.